The chain runs to 156 residues: MRSSAKQEELVRAFKALLKEEKFSSQGEIVLALQDQGFENINQSKVSRMLTKFGAVRTRNAKMEMVYCLPAELGVPTTSSPLKNLVLDIDYNDAVVVIHTSPGAAQLIARLLDSLGKAEGILGTIAGDDTIFTTPASGFSVRDLYEAILELFEQEL.

It belongs to the ArgR family.

It is found in the cytoplasm. The protein operates within amino-acid biosynthesis; L-arginine biosynthesis [regulation]. Regulates arginine biosynthesis genes. The protein is Arginine repressor of Salmonella agona (strain SL483).